The sequence spans 219 residues: tRNA (guanine-N(7)-)-methyltransferase (219 aa).

S-adenosyl-L-methionine-binding residues include Glu44, Asp69, Glu102, and Asn125. 2 residues coordinate substrate: Lys129 and Asp161.

The protein belongs to the class I-like SAM-binding methyltransferase superfamily. TrmB family.

It carries out the reaction guanosine(46) in tRNA + S-adenosyl-L-methionine = N(7)-methylguanosine(46) in tRNA + S-adenosyl-L-homocysteine. It functions in the pathway tRNA modification; N(7)-methylguanine-tRNA biosynthesis. In terms of biological role, catalyzes the formation of N(7)-methylguanine at position 46 (m7G46) in tRNA. The chain is tRNA (guanine-N(7)-)-methyltransferase from Clostridium perfringens (strain SM101 / Type A).